Consider the following 472-residue polypeptide: 3-isopropylmalate dehydratase large subunit (472 aa).

Residues Cys352, Cys412, and Cys415 each coordinate [4Fe-4S] cluster.

This sequence belongs to the aconitase/IPM isomerase family. LeuC type 1 subfamily. As to quaternary structure, heterodimer of LeuC and LeuD. [4Fe-4S] cluster serves as cofactor.

The enzyme catalyses (2R,3S)-3-isopropylmalate = (2S)-2-isopropylmalate. It participates in amino-acid biosynthesis; L-leucine biosynthesis; L-leucine from 3-methyl-2-oxobutanoate: step 2/4. In terms of biological role, catalyzes the isomerization between 2-isopropylmalate and 3-isopropylmalate, via the formation of 2-isopropylmaleate. The polypeptide is 3-isopropylmalate dehydratase large subunit (Roseiflexus castenholzii (strain DSM 13941 / HLO8)).